The primary structure comprises 196 residues: uncharacterized protein (196 aa).

Residues 21–35 (ESRRKDGSVRRERAV) show a composition bias toward basic and acidic residues. Disordered regions lie at residues 21 to 53 (ESRR…PGRG) and 65 to 196 (LQLS…KEKE). Over residues 66–75 (QLSNDASTSK) the composition is skewed to polar residues. 3 stretches are compositionally biased toward basic and acidic residues: residues 84 to 94 (ELEKEKLERPL), 100 to 143 (EKND…KDFK), and 173 to 196 (KMSK…KEKE).

This is an uncharacterized protein from Schizosaccharomyces pombe (strain 972 / ATCC 24843) (Fission yeast).